The primary structure comprises 188 residues: U1 small nuclear ribonucleoprotein C-2 (188 aa).

The Matrin-type zinc-finger motif lies at 4–36 (YYCDYCDVFLVSESPSVRKAHNSGRNHLTNVRD). Positions 57-188 (FETGGGNSTS…MNPDRARQLG (132 aa)) are disordered. The segment covering 72–82 (GNPPGSQPGPP) has biased composition (pro residues). Positions 109 to 124 (AMLALMNGQNGMSSPG) are enriched in low complexity. Over residues 125 to 141 (SGPPPMRFAGPPIPNNM) the composition is skewed to pro residues.

Belongs to the U1 small nuclear ribonucleoprotein C family. As to quaternary structure, U1 snRNP is composed of the 7 core Sm proteins B/B', D1, D2, D3, E, F and G that assemble in a heptameric protein ring on the Sm site of the small nuclear RNA to form the core snRNP, and at least 3 U1 snRNP-specific proteins U1-70K, U1-A and U1-C. U1-C interacts with U1 snRNA and the 5' splice-site region of the pre-mRNA.

The protein localises to the nucleus. Functionally, component of the spliceosomal U1 snRNP, which is essential for recognition of the pre-mRNA 5' splice-site and the subsequent assembly of the spliceosome. U1-C is directly involved in initial 5' splice-site recognition for both constitutive and regulated alternative splicing. The interaction with the 5' splice-site seems to precede base-pairing between the pre-mRNA and the U1 snRNA. Stimulates commitment or early (E) complex formation by stabilizing the base pairing of the 5' end of the U1 snRNA and the 5' splice-site region. In Puccinia graminis f. sp. tritici (strain CRL 75-36-700-3 / race SCCL) (Black stem rust fungus), this protein is U1 small nuclear ribonucleoprotein C-2.